A 256-amino-acid chain; its full sequence is MRHPLVIGNWKLNGSKHMVSNFIISLRNQLSNMINCCNVAIAPPMIYLDRAKSYLTGSHIALGAQNVDLHVSGAFTGEISAKMLKDIGAKYIIIGHIERRLYHKESNEDIANKFACLKNEGLIPVLCIGETKEENEKDQTKAICVRQLDYILNIVGTQAFKNAVIAYEPIWAIATGKSANPLQIQKIHKFIRSYLFNHDQAIAEQVIIQYGGSVNASNAAELFNQPDVDGALVGGASLKADIFATIIKAAARAKKN.

N9–K11 contacts substrate. The Electrophile role is filled by H96. E168 serves as the catalytic Proton acceptor. Residues S213 and G234–G235 each bind substrate.

Belongs to the triosephosphate isomerase family. In terms of assembly, homodimer.

The protein localises to the cytoplasm. It catalyses the reaction D-glyceraldehyde 3-phosphate = dihydroxyacetone phosphate. It functions in the pathway carbohydrate biosynthesis; gluconeogenesis. It participates in carbohydrate degradation; glycolysis; D-glyceraldehyde 3-phosphate from glycerone phosphate: step 1/1. Involved in the gluconeogenesis. Catalyzes stereospecifically the conversion of dihydroxyacetone phosphate (DHAP) to D-glyceraldehyde-3-phosphate (G3P). The polypeptide is Triosephosphate isomerase (Baumannia cicadellinicola subsp. Homalodisca coagulata).